A 614-amino-acid chain; its full sequence is Acid phosphatase (614 aa).

Residues 1 to 22 form the signal peptide; sequence MKGTAASALLVALSATAAQARP. In terms of domain architecture, Fibronectin type-III spans 80 to 176; it reads IPKGMHIHYQ…EVLSFKTSRP (97 aa). N-linked (GlcNAc...) asparagine glycosylation is found at N110, N161, N242, N295, N333, N340, N352, N408, N429, N512, N523, N559, and N578. Positions 606–614 are excised as a propeptide; sequence VAGGKKLHS.

In terms of assembly, monomer. Cu cation serves as cofactor. Glycosylated; probably with N-linked high-mannose oligosaccharides.

The protein resides in the secreted. The catalysed reaction is a phosphate monoester + H2O = an alcohol + phosphate. Competitively inhibited by phosphomycin and inorganic orthophosphate. This is Acid phosphatase (aphA) from Aspergillus ficuum.